Consider the following 366-residue polypeptide: tRNA-specific 2-thiouridylase MnmA (366 aa).

ATP-binding positions include alanine 6–serine 13 and leucine 32. The Nucleophile role is filled by cysteine 101. Cysteine 101 and cysteine 197 are disulfide-bonded. Glycine 125 contacts ATP. Residues lysine 147–glutamine 149 are interaction with tRNA. Cysteine 197 serves as the catalytic Cysteine persulfide intermediate.

Belongs to the MnmA/TRMU family.

The protein localises to the cytoplasm. The catalysed reaction is S-sulfanyl-L-cysteinyl-[protein] + uridine(34) in tRNA + AH2 + ATP = 2-thiouridine(34) in tRNA + L-cysteinyl-[protein] + A + AMP + diphosphate + H(+). Functionally, catalyzes the 2-thiolation of uridine at the wobble position (U34) of tRNA, leading to the formation of s(2)U34. The chain is tRNA-specific 2-thiouridylase MnmA from Cutibacterium acnes (strain DSM 16379 / KPA171202) (Propionibacterium acnes).